Here is a 1100-residue protein sequence, read N- to C-terminus: MASRTRSESPLEPRLYAGAGSRADHPSLVLMLSVVMLVTCLEAAKLTVGFHAPWNISHPFSVQRLGAGLQTVVDKLNSEPVGLGNVSWEFTYTNSTCSAKESLAVFIDQVQKEHISALFGPACPEAAEVIGLLASEWNIPLFDFVGQMAALKDHFWCDTCVTLVPPKQEISAVLRESLRYLGWEHIGVFGGSSADSSWEQVDEMWGAVEDGLQFHFNITASMRYNSSSSDLLQEGLRNMSYVARVIILICSSEDARRILQAAVDLGLDTGEFVFILLQQLEDSFWKEVLTKDKVIRFPKVYESVFLIAPSAYGGGIGDDGFRKQVSQELRRPPFQSSITSEDQVSPYSAYLHDALLLYAQTVEEMRKAEKDFRDGRQLISTLRAGQVTLQGITGPVLLDSQGKRHVDYSVYALQESGNRSLFLPFLHYDSFQKVIRPWRNDSNTSWPHGSLPEYKPGCGFHNDLCKTKPPTVAGMTVTVTAVIPTVTFLVLASAAAITGLMLWRLRGKVQSHPGDTWWQIRYDSITLLPQHKLSHRGTPVSRRNVSDTSTVKASADCGSLVKRHQDEELFFAPVGLYQGNQVALCYIGDEAEAWVKKPTVRREVCLMCELKHENIVPFFGVCTEPPNICIVTQYCKKGSLQDVMRNSDHEIDWIFKLSFAYDIVNGLLFLHGSPLRSHGNLKPSNCLVDSHMQLKLSGFGLWEFKHGSTWRSYNQEATDHSELYWTAPELLRLRESPCSGTPQGDVYSFAILLRDLIHQQAHGPFEDLEAAPEEIISRIKDPRAPVPLRPSLLEDKGDGRIVALVRECWDESPELRPIFPSIKKTLREASPRGHVSILDSMMGKLETYANHLEEVVEERTRELVAEKRKVEKLLSTMLPSFVGEQLIAGKSVEPEHFESVTIFFSDIVGFTKLCSLSSPLQVVKLLNDLYSLFDHTIQSHDVYKVETIGDAYMVASGLPIRNGAQHADEIATMALHLLSVTTHFQIGHMPEERLKLRIGLHTGPVVAGVVGITMPRYCLFGDTVNMASRMESSSLPLRIHVSQSTAGALLAAGGYHLQKRGTISVKGKGEQTTFWLKGKDGFPVPLPEFTEEEAKVSEIL.

The N-terminal stretch at 1-43 (MASRTRSESPLEPRLYAGAGSRADHPSLVLMLSVVMLVTCLEA) is a signal peptide. The Extracellular segment spans residues 44 to 481 (AKLTVGFHAP…VAGMTVTVTA (438 aa)). Residues Asn-55, Asn-85, Asn-94, Asn-217, Asn-225, Asn-238, Asn-418, Asn-440, and Asn-443 are each glycosylated (N-linked (GlcNAc...) asparagine). Residues 482-502 (VIPTVTFLVLASAAAITGLML) form a helical membrane-spanning segment. Residues 503–1100 (WRLRGKVQSH…EEEAKVSEIL (598 aa)) lie on the Cytoplasmic side of the membrane. Residues 546–837 (SDTSTVKASA…EASPRGHVSI (292 aa)) enclose the Protein kinase domain. The Guanylate cyclase domain occupies 901 to 1031 (TIFFSDIVGF…DTVNMASRME (131 aa)).

It belongs to the adenylyl cyclase class-4/guanylyl cyclase family. Homooligomer. In vitro interacts with NPR1/GC-A. Post-translationally, N-glycosylated. In terms of tissue distribution, highly expressed in testis.

It is found in the cell membrane. The enzyme catalyses GTP = 3',5'-cyclic GMP + diphosphate. In Mus musculus (Mouse), this protein is Guanylate cyclase 2G (Gucy2g).